The primary structure comprises 255 residues: 20 kDa chaperonin, chloroplastic (255 aa).

The N-terminal 53 residues, 1–53, are a transit peptide targeting the chloroplast; that stretch reads MAATHLTSTSSLTINTLPSFEGLRSASGISKINVSVAYPSFTSRSFRGLVVRA. 2 cpn-10 domain regions span residues 54–156 and 157–255; these read ASIT…ILET and DDVK…AVLS.

This sequence belongs to the GroES chaperonin family. Forms stable complexes with CPN60 in the presence of ATP.

Its subcellular location is the plastid. The protein resides in the chloroplast. In terms of biological role, seems to function only as a co-chaperone, along with cpn60, and in certain cases is essential for the discharge of biologically active proteins from cpn60. This Spinacia oleracea (Spinach) protein is 20 kDa chaperonin, chloroplastic (CPN21).